We begin with the raw amino-acid sequence, 532 residues long: Aspartate--tRNA ligase 1, cytoplasmic (532 aa).

Positions 7–41 (LEECGEKISKKESKKRAAKLEKLLRKQEREEATSS) form a coiled coil. A disordered region spans residues 31 to 58 (RKQEREEATSSSLSLEEEDESCSSNYGD). Residues 88–169 (VSIRGRLHKN…QVEIHVRKMY (82 aa)) constitute a DNA-binding region (OB). E260 provides a ligand contact to L-aspartate. The aspartate stretch occupies residues 282 to 285 (QLHK). R304 lines the L-aspartate pocket. Residues 304-306 (RAE), 312-314 (RHL), and E455 each bind ATP. 2 residues coordinate Mg(2+): E455 and S458. The L-aspartate site is built by S458 and R462. Residue 503-506 (GLER) participates in ATP binding.

This sequence belongs to the class-II aminoacyl-tRNA synthetase family. Type 2 subfamily.

It is found in the cytoplasm. The protein resides in the cytosol. It catalyses the reaction tRNA(Asp) + L-aspartate + ATP = L-aspartyl-tRNA(Asp) + AMP + diphosphate. Catalyzes the specific attachment of an amino acid to its cognate tRNA in a 2 step reaction: the amino acid (AA) is first activated by ATP to form AA-AMP and then transferred to the acceptor end of the tRNA. This is Aspartate--tRNA ligase 1, cytoplasmic from Arabidopsis thaliana (Mouse-ear cress).